The sequence spans 431 residues: Large envelope protein (431 aa).

Glycine 2 is lipidated: N-myristoyl glycine; by host. The interval 2 to 148 (GNNIKVTFNP…PPLRDTHPHL (147 aa)) is pre-S1. The segment at 2-207 (GNNIKVTFNP…PSTTGDPALS (206 aa)) is pre-S. The Virion surface; in external conformation portion of the chain corresponds to 2–214 (GNNIKVTFNP…ALSPEMSPSS (213 aa)). Residues 2 to 286 (GNNIKVTFNP…NGFRWMYLRR (285 aa)) lie on the Intravirion; in internal conformation side of the membrane. An N-linked (GlcNAc...) asparagine glycan is attached at asparagine 3. Residues 115 to 147 (IPRGLVPPQTPTNRDQGRKPTPPTPPLRDTHPH) form a disordered region. The tract at residues 149-207 (TMKNQTFHLQGFVDGLRDLTTTERQHNAYGDPFTTLSPAVPTVSTILSPPSTTGDPALS) is pre-S2. Residues 215-235 (LLGLLAGLQVVYFLWTKILTI) traverse the membrane as a helical segment. Over 236–286 (AQNLDWWWTSLSFPGGIPECTGQNSQFQTCKHLPTSCPPTCNGFRWMYLRR) the chain is Intravirion; in external conformation. Residues 287–307 (FIIYLLVLLLCLIFLLVLLDW) traverse the membrane as a helical segment. Over 308–379 (KGFIPVCPLQ…WALARFSWLN (72 aa)) the chain is Virion surface. Asparagine 351 is a glycosylation site (N-linked (GlcNAc...) asparagine; by host). The helical transmembrane segment at 380-400 (LLVPLLQWLGGISLIAWFLLI) threads the bilayer. The Intravirion segment spans residues 401–406 (WMIWFW). Residues 407-429 (GPALLSILPPFIPIFVLFFLIWV) form a helical membrane-spanning segment. Topologically, residues 430–431 (YI) are virion surface.

This sequence belongs to the orthohepadnavirus major surface antigen family. In its internal form (Li-HBsAg), interacts with the capsid protein and with the isoform S. Interacts with host chaperone CANX. In terms of assembly, associates with host chaperone CANX through its pre-S2 N glycan; this association may be essential for isoform M proper secretion. As to quaternary structure, interacts with isoform L. Interacts with the antigens of satellite virus HDV (HDVAgs); this interaction is required for encapsidation of HDV genomic RNA. Post-translationally, isoform M is N-terminally acetylated by host at a ratio of 90%, and N-glycosylated by host at the pre-S2 region. In terms of processing, myristoylated.

The protein localises to the virion membrane. The large envelope protein exists in two topological conformations, one which is termed 'external' or Le-HBsAg and the other 'internal' or Li-HBsAg. In its external conformation the protein attaches the virus to cell receptors and thereby initiating infection. This interaction determines the species specificity and liver tropism. This attachment induces virion internalization predominantly through caveolin-mediated endocytosis. The large envelope protein also assures fusion between virion membrane and endosomal membrane. In its internal conformation the protein plays a role in virion morphogenesis and mediates the contact with the nucleocapsid like a matrix protein. Functionally, the middle envelope protein plays an important role in the budding of the virion. It is involved in the induction of budding in a nucleocapsid independent way. In this process the majority of envelope proteins bud to form subviral lipoprotein particles of 22 nm of diameter that do not contain a nucleocapsid. The sequence is that of Large envelope protein from Marmota monax (Woodchuck).